The chain runs to 448 residues: tRNA(Ile)-lysidine synthase (448 aa).

25–30 (SGGSDS) contributes to the ATP binding site.

Belongs to the tRNA(Ile)-lysidine synthase family.

The protein resides in the cytoplasm. It catalyses the reaction cytidine(34) in tRNA(Ile2) + L-lysine + ATP = lysidine(34) in tRNA(Ile2) + AMP + diphosphate + H(+). Its function is as follows. Ligates lysine onto the cytidine present at position 34 of the AUA codon-specific tRNA(Ile) that contains the anticodon CAU, in an ATP-dependent manner. Cytidine is converted to lysidine, thus changing the amino acid specificity of the tRNA from methionine to isoleucine. The chain is tRNA(Ile)-lysidine synthase from Brucella canis (strain ATCC 23365 / NCTC 10854 / RM-666).